Reading from the N-terminus, the 259-residue chain is Global transcriptional regulator CodY (259 aa).

The segment at 1 to 155 is GAF domain; sequence MTLLEKTRKI…GGTVVGMEIL (155 aa). Positions 203 to 222 form a DNA-binding region, H-T-H motif; it reads ASKIADRVGITRSVIVNALR.

It belongs to the CodY family.

Its subcellular location is the cytoplasm. Functionally, DNA-binding global transcriptional regulator which is involved in the adaptive response to starvation and acts by directly or indirectly controlling the expression of numerous genes in response to nutrient availability. During rapid exponential growth, CodY is highly active and represses genes whose products allow adaptation to nutrient depletion. The protein is Global transcriptional regulator CodY of Listeria monocytogenes serotype 4b (strain CLIP80459).